We begin with the raw amino-acid sequence, 114 residues long: Iron-sulfur cluster insertion protein ErpA (114 aa).

Positions 42, 106, and 108 each coordinate iron-sulfur cluster.

The protein belongs to the HesB/IscA family. Homodimer. Iron-sulfur cluster is required as a cofactor.

In terms of biological role, required for insertion of 4Fe-4S clusters for at least IspG. This is Iron-sulfur cluster insertion protein ErpA from Edwardsiella ictaluri (strain 93-146).